We begin with the raw amino-acid sequence, 224 residues long: MAITDWPIEERPREKLLNRGAHALSDAELLAIFLRTGVKGKSAVDLARELLAYFGGLRPLLEASQQDFCQAQGLGNAKFSQLQAVLEMSRRHLAAALEQKTSLTSTTAVKQFVSAQLRHRQSEVFALILLNTQNQLIKFVELFNGTIDSASVYPREVVKTALSHNAAAVILAHNHPSGIAEPSEPDKAITKRLQQALQLVDIRTLDHLVVGDTEAVSFAERGWI.

The MPN domain occupies 102–224; it reads SLTSTTAVKQ…AVSFAERGWI (123 aa). Zn(2+) is bound by residues His-173, His-175, and Asp-186. The JAMM motif motif lies at 173-186; it reads HNHPSGIAEPSEPD.

Belongs to the UPF0758 family.

The sequence is that of UPF0758 protein Sde_3678 from Saccharophagus degradans (strain 2-40 / ATCC 43961 / DSM 17024).